The sequence spans 312 residues: Ribosomal RNA small subunit methyltransferase H (312 aa).

S-adenosyl-L-methionine is bound by residues 34–36 (GGH), aspartate 54, phenylalanine 78, aspartate 100, and glutamine 107.

Belongs to the methyltransferase superfamily. RsmH family.

It is found in the cytoplasm. The enzyme catalyses cytidine(1402) in 16S rRNA + S-adenosyl-L-methionine = N(4)-methylcytidine(1402) in 16S rRNA + S-adenosyl-L-homocysteine + H(+). Functionally, specifically methylates the N4 position of cytidine in position 1402 (C1402) of 16S rRNA. This chain is Ribosomal RNA small subunit methyltransferase H, found in Salmonella choleraesuis (strain SC-B67).